A 281-amino-acid chain; its full sequence is Ribonuclease HII (281 aa).

A disordered region spans residues 1 to 46; sequence MIRDTKQPIKVPAKPASRSGGKAKTVKPKTIKPKTSAKAAAAKPAS. A compositionally biased stretch (low complexity) spans 33–46; the sequence is PKTSAKAAAAKPAS. The RNase H type-2 domain occupies 73–261; it reads WPIAGCDEAG…VAAAWQKIEG (189 aa). A divalent metal cation is bound by residues Asp-79, Glu-80, and Asp-170.

This sequence belongs to the RNase HII family. Mn(2+) serves as cofactor. It depends on Mg(2+) as a cofactor.

Its subcellular location is the cytoplasm. It carries out the reaction Endonucleolytic cleavage to 5'-phosphomonoester.. Functionally, endonuclease that specifically degrades the RNA of RNA-DNA hybrids. The sequence is that of Ribonuclease HII from Rhodopseudomonas palustris (strain TIE-1).